A 342-amino-acid chain; its full sequence is Ferredoxin--NADP reductase (342 aa).

Cys17, Asp36, Gln44, Tyr49, Val89, Phe124, Asp289, and Thr330 together coordinate FAD.

The protein belongs to the ferredoxin--NADP reductase type 2 family. Homodimer. Requires FAD as cofactor.

The enzyme catalyses 2 reduced [2Fe-2S]-[ferredoxin] + NADP(+) + H(+) = 2 oxidized [2Fe-2S]-[ferredoxin] + NADPH. The sequence is that of Ferredoxin--NADP reductase from Bradyrhizobium sp. (strain ORS 278).